Here is a 94-residue protein sequence, read N- to C-terminus: Small ribosomal subunit protein uS19 (94 aa).

Residues 73 to 94 form a disordered region; that stretch reads EFSPTRRFGGHADKKSKKGQVK.

Belongs to the universal ribosomal protein uS19 family.

Functionally, protein S19 forms a complex with S13 that binds strongly to the 16S ribosomal RNA. The polypeptide is Small ribosomal subunit protein uS19 (Kosmotoga olearia (strain ATCC BAA-1733 / DSM 21960 / TBF 19.5.1)).